Consider the following 261-residue polypeptide: Proliferating cell nuclear antigen (261 aa).

N6-acetyllysine is present on residues Lys-14, Lys-77, and Lys-80. A DNA-binding region spans residues 61–80; that stretch reads RCDRNLAMGVNLTSMSKILK. A disulfide bridge links Cys-135 with Cys-162. Lys-164 participates in a covalent cross-link: Glycyl lysine isopeptide (Lys-Gly) (interchain with G-Cter in SUMO2); alternate. Lys-164 participates in a covalent cross-link: Glycyl lysine isopeptide (Lys-Gly) (interchain with G-Cter in ubiquitin); alternate. Tyr-211 is modified (phosphotyrosine; by EGFR). Lys-248 is modified (N6-acetyllysine). Residue Lys-254 forms a Glycyl lysine isopeptide (Lys-Gly) (interchain with G-Cter in SUMO2) linkage.

It belongs to the PCNA family. As to quaternary structure, homotrimer. Interacts with p300/EP300; the interaction occurs on chromatin in UV-irradiated damaged cells. Interacts with CREBBP (via transactivation domain and C-terminus); the interaction occurs on chromatin in UV-irradiated damaged cells. Directly interacts with POLD1, POLD3 and POLD4 subunits of the DNA polymerase delta complex, POLD3 being the major interacting partner; the interaction with POLD3 is inhibited by CDKN1A/p21(CIP1). Forms a complex with activator 1 heteropentamer in the presence of ATP. Interacts with EXO1, POLH, POLK, DNMT1, ERCC5, FEN1, CDC6 and POLDIP2. Interacts with POLB. Interacts with APEX2; this interaction is triggered by reactive oxygen species and increased by misincorporation of uracil in nuclear DNA. Forms a ternary complex with DNTTIP2 and core histone. Interacts with KCTD10. Interacts with PPP1R15A. Interacts with SMARCA5/SNF2H. Interacts with BAZ1B/WSTF; the interaction is direct and is required for BAZ1B/WSTF binding to replication foci during S phase. Interacts with HLTF and SHPRH. Interacts with NUDT15; this interaction is disrupted in response to UV irradiation and acetylation. Interacts with CDKN1A/p21(CIP1) and CDT1; interacts via their PIP-box which also recruits the DCX(DTL) complex. The interaction with CDKN1A inhibits POLD3 binding. Interacts with DDX11. Interacts with EGFR; positively regulates PCNA. Interacts with PARPBP. Interacts (when ubiquitinated) with SPRTN; leading to enhance RAD18-mediated PCNA ubiquitination. Interacts (when polyubiquitinated) with ZRANB3. Interacts with SMARCAD1. Interacts with CDKN1C. Interacts with PCLAF (via PIP-box). Interacts with RTEL1 (via PIP-box); the interaction is direct and essential for the suppression of telomere fragility. Interacts with FAM111A (via PIP-box); the interaction is direct and required for PCNA loading on chromatin binding. Interacts with LIG1. Interacts with SETMAR. Interacts with ANKRD17. Interacts with FBXO18/FBH1 (via PIP-box); the interaction recruits the DCX(DTL) complex and promotes ubiquitination and degradation of FBXO18/FBH1. Interacts with POLN. Interacts with SDE2 (via PIP-box); the interaction is direct and prevents ultraviolet light induced monoubiquitination. Component of the replisome complex composed of at least DONSON, MCM2, MCM7, PCNA and TICRR; interaction at least with PCNA occurs during DNA replication. Interacts with MAPK15; the interaction is chromatin binding dependent and prevents MDM2-mediated PCNA destruction by inhibiting the association of PCNA with MDM2. Interacts with PARP10 (via PIP-box). Interacts with DDI2. Interacts with HMCES (via PIP-box). Interacts with TRAIP (via PIP-box). Interacts with UHRF2. Interacts with ALKBH2; this interaction is enhanced during the S-phase of the cell cycle. Interacts with ATAD5; the interaction promotes USP1-mediated PCNA deubiquitination. Interacts (when phosphorylated) with GRB2. Interacts with ANG. Interacts with nuclear UNG; this interaction mediates UNG recruitment to S-phase replication foci. Interacts with ERCC6L2 (via an atypical PIP-box); this interaction facilitates cenrtomeric localization of ERCC6L2. In terms of processing, phosphorylated. Phosphorylation at Tyr-211 by EGFR stabilizes chromatin-associated PCNA. Post-translationally, acetylated by CREBBP and p300/EP300; preferentially acetylated by CREBBP on Lys-80, Lys-13 and Lys-14 and on Lys-77 by p300/EP300 upon loading on chromatin in response to UV irradiation. Lysine acetylation disrupts association with chromatin, hence promoting PCNA ubiquitination and proteasomal degradation in response to UV damage in a CREBBP- and EP300-dependent manner. Acetylation disrupts interaction with NUDT15 and promotes degradation. Ubiquitinated. Following DNA damage, can be either monoubiquitinated to stimulate direct bypass of DNA lesions by specialized DNA polymerases or polyubiquitinated to promote recombination-dependent DNA synthesis across DNA lesions by template switching mechanisms. Following induction of replication stress, monoubiquitinated by the UBE2B-RAD18 complex on Lys-164, leading to recruit translesion (TLS) polymerases, which are able to synthesize across DNA lesions in a potentially error-prone manner. An error-free pathway also exists and requires non-canonical polyubiquitination on Lys-164 through 'Lys-63' linkage of ubiquitin moieties by the E2 complex UBE2N-UBE2V2 and the E3 ligases, HLTF, RNF8 and SHPRH. This error-free pathway, also known as template switching, employs recombination mechanisms to synthesize across the lesion, using as a template the undamaged, newly synthesized strand of the sister chromatid. Monoubiquitination at Lys-164 also takes place in undamaged proliferating cells, and is mediated by the DCX(DTL) complex, leading to enhance PCNA-dependent translesion DNA synthesis. Sumoylated during S phase. In terms of processing, methylated on glutamate residues by ARMT1.

It localises to the nucleus. Auxiliary protein of DNA polymerase delta and epsilon, is involved in the control of eukaryotic DNA replication by increasing the polymerase's processibility during elongation of the leading strand. Induces a robust stimulatory effect on the 3'-5' exonuclease and 3'-phosphodiesterase, but not apurinic-apyrimidinic (AP) endonuclease, APEX2 activities. Has to be loaded onto DNA in order to be able to stimulate APEX2. Plays a key role in DNA damage response (DDR) by being conveniently positioned at the replication fork to coordinate DNA replication with DNA repair and DNA damage tolerance pathways. Acts as a loading platform to recruit DDR proteins that allow completion of DNA replication after DNA damage and promote postreplication repair: Monoubiquitinated PCNA leads to recruitment of translesion (TLS) polymerases, while 'Lys-63'-linked polyubiquitination of PCNA is involved in error-free pathway and employs recombination mechanisms to synthesize across the lesion. This Mus musculus (Mouse) protein is Proliferating cell nuclear antigen (Pcna).